Here is a 238-residue protein sequence, read N- to C-terminus: MEDSFLESFGRLSLQQRQQQPPPRPPPARGPPPRRHSFRKHLYLLRGLPGSGKTTLARQLQHDYPRALIFSTDDFFFKEDGTYEFNPNLLEEAHEWNQRRARKAMRNGISPIIIDNTNLHAWEMKPYAVMALENNYEVIFREPDTRWKFNVQELARRNIHGVPKEKIQRMKERYEHNVTFHSVLHAEKPSRANRNQGRNSEPSSGSGYWNTYTELPNRRANGLYSNEGYRRGGHHQGY.

2 disordered regions span residues 1-36 and 183-212; these read MEDS…PRRH and VLHA…WNTY. The segment covering 20–31 has biased composition (pro residues); it reads QPPPRPPPARGP. The segment covering 192–212 has biased composition (polar residues); the sequence is ANRNQGRNSEPSSGSGYWNTY.

Interacts with dynactin subunit proteins, including DCTN4, DCTN5 and DCTN5.

In terms of biological role, might play a role in adipocyte differentiation and triglyceride accumulation. The polypeptide is NEDD4-binding protein 2-like 1 (N4bp2l1) (Mus musculus (Mouse)).